A 134-amino-acid polypeptide reads, in one-letter code: 16 kDa beta-galactoside-binding lectin (134 aa).

Position 1 is an N-acetylmethionine (Met1). The region spanning Gly4–Ser134 is the Galectin domain. An a beta-D-galactoside-binding site is contributed by Trp69–Lys75.

In terms of assembly, homodimer. As to expression, mainly in the liver (adult), mainly in the muscle (embryo).

In terms of biological role, this protein binds beta-galactoside. Its physiological function is not yet known. It may be involved in the regulation of differentiation. The sequence is that of 16 kDa beta-galactoside-binding lectin from Gallus gallus (Chicken).